The primary structure comprises 159 residues: Probable inactive acireductone dioxygenase 1 (159 aa).

The protein belongs to the acireductone dioxygenase (ARD) family.

Its subcellular location is the cytoplasm. The protein resides in the nucleus. In terms of biological role, probable inactive acireductone dioxygenase. This Caenorhabditis elegans protein is Probable inactive acireductone dioxygenase 1.